Here is a 210-residue protein sequence, read N- to C-terminus: Thiamine-phosphate synthase (210 aa).

4-amino-2-methyl-5-(diphosphooxymethyl)pyrimidine is bound by residues glutamine 39–lysine 43 and asparagine 71. The Mg(2+) site is built by aspartate 72 and aspartate 91. Serine 110 is a 4-amino-2-methyl-5-(diphosphooxymethyl)pyrimidine binding site. Threonine 136 to threonine 138 is a 2-[(2R,5Z)-2-carboxy-4-methylthiazol-5(2H)-ylidene]ethyl phosphate binding site. Lysine 139 contributes to the 4-amino-2-methyl-5-(diphosphooxymethyl)pyrimidine binding site. 2-[(2R,5Z)-2-carboxy-4-methylthiazol-5(2H)-ylidene]ethyl phosphate-binding positions include glycine 166 and valine 186 to serine 187.

This sequence belongs to the thiamine-phosphate synthase family. Mg(2+) is required as a cofactor.

The enzyme catalyses 2-[(2R,5Z)-2-carboxy-4-methylthiazol-5(2H)-ylidene]ethyl phosphate + 4-amino-2-methyl-5-(diphosphooxymethyl)pyrimidine + 2 H(+) = thiamine phosphate + CO2 + diphosphate. It carries out the reaction 2-(2-carboxy-4-methylthiazol-5-yl)ethyl phosphate + 4-amino-2-methyl-5-(diphosphooxymethyl)pyrimidine + 2 H(+) = thiamine phosphate + CO2 + diphosphate. The catalysed reaction is 4-methyl-5-(2-phosphooxyethyl)-thiazole + 4-amino-2-methyl-5-(diphosphooxymethyl)pyrimidine + H(+) = thiamine phosphate + diphosphate. Its pathway is cofactor biosynthesis; thiamine diphosphate biosynthesis; thiamine phosphate from 4-amino-2-methyl-5-diphosphomethylpyrimidine and 4-methyl-5-(2-phosphoethyl)-thiazole: step 1/1. Its function is as follows. Condenses 4-methyl-5-(beta-hydroxyethyl)thiazole monophosphate (THZ-P) and 2-methyl-4-amino-5-hydroxymethyl pyrimidine pyrophosphate (HMP-PP) to form thiamine monophosphate (TMP). The protein is Thiamine-phosphate synthase of Ruminiclostridium cellulolyticum (strain ATCC 35319 / DSM 5812 / JCM 6584 / H10) (Clostridium cellulolyticum).